Reading from the N-terminus, the 192-residue chain is dTTP/UTP pyrophosphatase (192 aa).

The active-site Proton acceptor is aspartate 75.

This sequence belongs to the Maf family. YhdE subfamily. A divalent metal cation serves as cofactor.

The protein localises to the cytoplasm. The enzyme catalyses dTTP + H2O = dTMP + diphosphate + H(+). The catalysed reaction is UTP + H2O = UMP + diphosphate + H(+). In terms of biological role, nucleoside triphosphate pyrophosphatase that hydrolyzes dTTP and UTP. May have a dual role in cell division arrest and in preventing the incorporation of modified nucleotides into cellular nucleic acids. This is dTTP/UTP pyrophosphatase from Pelodictyon phaeoclathratiforme (strain DSM 5477 / BU-1).